Consider the following 247-residue polypeptide: 2,3-bisphosphoglycerate-dependent phosphoglycerate mutase (247 aa).

Substrate is bound by residues 8–15 (RHGESTWN), 21–22 (TG), Arg60, 87–90 (ERHY), Lys98, 114–115 (RR), and 183–184 (GN). His9 acts as the Tele-phosphohistidine intermediate in catalysis. Glu87 functions as the Proton donor/acceptor in the catalytic mechanism.

The protein belongs to the phosphoglycerate mutase family. BPG-dependent PGAM subfamily. As to quaternary structure, homodimer.

It carries out the reaction (2R)-2-phosphoglycerate = (2R)-3-phosphoglycerate. It participates in carbohydrate degradation; glycolysis; pyruvate from D-glyceraldehyde 3-phosphate: step 3/5. Functionally, catalyzes the interconversion of 2-phosphoglycerate and 3-phosphoglycerate. The polypeptide is 2,3-bisphosphoglycerate-dependent phosphoglycerate mutase (Paracidovorax citrulli (strain AAC00-1) (Acidovorax citrulli)).